The following is a 130-amino-acid chain: Small ribosomal subunit protein uS8 (130 aa).

Belongs to the universal ribosomal protein uS8 family. Part of the 30S ribosomal subunit. Contacts proteins S5 and S12.

Its function is as follows. One of the primary rRNA binding proteins, it binds directly to 16S rRNA central domain where it helps coordinate assembly of the platform of the 30S subunit. The sequence is that of Small ribosomal subunit protein uS8 from Shigella boydii serotype 18 (strain CDC 3083-94 / BS512).